The sequence spans 191 residues: Molybdenum cofactor guanylyltransferase (191 aa).

GTP-binding positions include 11 to 13 (LCG), Lys23, Asp66, and Asp97. A Mg(2+)-binding site is contributed by Asp97.

Belongs to the MobA family. In terms of assembly, monomer. Mg(2+) is required as a cofactor.

It localises to the cytoplasm. The enzyme catalyses Mo-molybdopterin + GTP + H(+) = Mo-molybdopterin guanine dinucleotide + diphosphate. Functionally, transfers a GMP moiety from GTP to Mo-molybdopterin (Mo-MPT) cofactor (Moco or molybdenum cofactor) to form Mo-molybdopterin guanine dinucleotide (Mo-MGD) cofactor. This is Molybdenum cofactor guanylyltransferase from Campylobacter jejuni subsp. jejuni serotype O:6 (strain 81116 / NCTC 11828).